A 217-amino-acid polypeptide reads, in one-letter code: Small ribosomal subunit protein uS3c (217 aa).

Positions 43–117 (IKNYVQKNRK…KLNIAITRIA (75 aa)) constitute a KH type-2 domain.

This sequence belongs to the universal ribosomal protein uS3 family. In terms of assembly, part of the 30S ribosomal subunit.

It is found in the plastid. It localises to the chloroplast. This Ranunculus macranthus (Large buttercup) protein is Small ribosomal subunit protein uS3c (rps3).